The primary structure comprises 166 residues: Urease accessory protein UreE 2 (166 aa).

Positions 135–154 (EHGAYGGGHHHSRAGEEDFN) are disordered.

Belongs to the UreE family.

The protein localises to the cytoplasm. Its function is as follows. Involved in urease metallocenter assembly. Binds nickel. Probably functions as a nickel donor during metallocenter assembly. This Pseudomonas syringae pv. syringae (strain B728a) protein is Urease accessory protein UreE 2.